We begin with the raw amino-acid sequence, 308 residues long: Ribosomal RNA large subunit methyltransferase F (308 aa).

It belongs to the methyltransferase superfamily. METTL16/RlmF family.

It is found in the cytoplasm. It catalyses the reaction adenosine(1618) in 23S rRNA + S-adenosyl-L-methionine = N(6)-methyladenosine(1618) in 23S rRNA + S-adenosyl-L-homocysteine + H(+). Specifically methylates the adenine in position 1618 of 23S rRNA. This Shigella boydii serotype 18 (strain CDC 3083-94 / BS512) protein is Ribosomal RNA large subunit methyltransferase F.